A 576-amino-acid chain; its full sequence is Eukaryotic translation initiation factor 3 subunit L (576 aa).

The PCI domain maps to 330-536 (DAIRVFANIL…IHIADTKVAR (207 aa)).

It belongs to the eIF-3 subunit L family. Component of the eukaryotic translation initiation factor 3 (eIF-3) complex, which is composed of 13 subunits: eif3a, eif3b, eif3c, eif3d, eif3e, eif3f, eif3g, eif3h, eif3i, eif3j, eif3k, eif3l and eif3m.

It is found in the cytoplasm. In terms of biological role, component of the eukaryotic translation initiation factor 3 (eIF-3) complex, which is involved in protein synthesis of a specialized repertoire of mRNAs and, together with other initiation factors, stimulates binding of mRNA and methionyl-tRNAi to the 40S ribosome. The eIF-3 complex specifically targets and initiates translation of a subset of mRNAs involved in cell proliferation. The sequence is that of Eukaryotic translation initiation factor 3 subunit L (eif3l) from Danio rerio (Zebrafish).